The primary structure comprises 156 residues: MKVIEGVIPAPQAKIAIVVSRFNSFINDRLVEGALDTLKRQGQIADENITLVKVPGAVELPLAAKRLAKSKQFDGIVALGCVIRGGTAHFEYVSGECAKGLAQVALEAEIPVAFGVLTTENIEQAIERAGTKAGNKGVEAALSTLEMINVMNALGA.

5-amino-6-(D-ribitylamino)uracil-binding positions include F22, 57–59 (AVE), and 81–83 (CVI). 86–87 (GT) is a binding site for (2S)-2-hydroxy-3-oxobutyl phosphate. Residue H89 is the Proton donor of the active site. F114 contacts 5-amino-6-(D-ribitylamino)uracil. R128 provides a ligand contact to (2S)-2-hydroxy-3-oxobutyl phosphate.

It belongs to the DMRL synthase family. Forms an icosahedral capsid composed of 60 subunits, arranged as a dodecamer of pentamers.

The enzyme catalyses (2S)-2-hydroxy-3-oxobutyl phosphate + 5-amino-6-(D-ribitylamino)uracil = 6,7-dimethyl-8-(1-D-ribityl)lumazine + phosphate + 2 H2O + H(+). Its pathway is cofactor biosynthesis; riboflavin biosynthesis; riboflavin from 2-hydroxy-3-oxobutyl phosphate and 5-amino-6-(D-ribitylamino)uracil: step 1/2. Functionally, catalyzes the formation of 6,7-dimethyl-8-ribityllumazine by condensation of 5-amino-6-(D-ribitylamino)uracil with 3,4-dihydroxy-2-butanone 4-phosphate. This is the penultimate step in the biosynthesis of riboflavin. The chain is 6,7-dimethyl-8-ribityllumazine synthase from Tolumonas auensis (strain DSM 9187 / NBRC 110442 / TA 4).